Consider the following 96-residue polypeptide: Putative pterin-4-alpha-carbinolamine dehydratase (96 aa).

This sequence belongs to the pterin-4-alpha-carbinolamine dehydratase family.

The catalysed reaction is (4aS,6R)-4a-hydroxy-L-erythro-5,6,7,8-tetrahydrobiopterin = (6R)-L-erythro-6,7-dihydrobiopterin + H2O. The polypeptide is Putative pterin-4-alpha-carbinolamine dehydratase (Prochlorococcus marinus (strain MIT 9215)).